A 358-amino-acid polypeptide reads, in one-letter code: Methylthioribose-1-phosphate isomerase (358 aa).

Residues 54-56, Arg96, and Gln205 contribute to the substrate site; that span reads RGA. Asp246 acts as the Proton donor in catalysis. 256–257 provides a ligand contact to substrate; sequence GK.

Belongs to the eIF-2B alpha/beta/delta subunits family. MtnA subfamily.

It catalyses the reaction 5-(methylsulfanyl)-alpha-D-ribose 1-phosphate = 5-(methylsulfanyl)-D-ribulose 1-phosphate. Its pathway is amino-acid biosynthesis; L-methionine biosynthesis via salvage pathway; L-methionine from S-methyl-5-thio-alpha-D-ribose 1-phosphate: step 1/6. Functionally, catalyzes the interconversion of methylthioribose-1-phosphate (MTR-1-P) into methylthioribulose-1-phosphate (MTRu-1-P). The sequence is that of Methylthioribose-1-phosphate isomerase from Pseudomonas putida (strain ATCC 47054 / DSM 6125 / CFBP 8728 / NCIMB 11950 / KT2440).